The following is a 300-amino-acid chain: Exonuclease (300 aa).

It carries out the reaction Exonucleolytic cleavage in the 5'- to 3'-direction to yield nucleoside 5'-phosphates.. Its function is as follows. Plays an essential role in phage DNA replication by participating in the removal of DNA-linked RNA primers. Participates also in T7 DNA packaging, host DNA degradation and phage genetic recombination. The sequence is that of Exonuclease from Escherichia phage T7 (Bacteriophage T7).